Reading from the N-terminus, the 267-residue chain is Transcription factor HES-1-A (267 aa).

The disordered stretch occupies residues 1 to 43; sequence MPADVMEKNSSSPVAATPASVSNTPDKPKTASEHRKSSKPIME. Over residues 10–22 the composition is skewed to low complexity; it reads SSSPVAATPASVS. Residues 26 to 35 show a composition bias toward basic and acidic residues; that stretch reads DKPKTASEHR. Positions 34-91 constitute a bHLH domain; that stretch reads HRKSSKPIMEKRRRARINESLGQLKTLILDALKKDSSRHSKLEKADILEMTVKHLRNL. Positions 110–143 constitute an Orange domain; that stretch reads YRAGFSECMNEVTRFLSTCEGVNTDVRTRLLGHL. The WRPW motif signature appears at 264–267; sequence WRPW.

As to quaternary structure, transcription repression requires formation of a complex with a corepressor protein of the Groucho/TLE family. Interacts with the bHLH protein hes2, and binds DNA in the form of a heterodimer with the bHLH protein hey1/hrt1. Interacts with the bHLH protein hes6; this interaction may inhibit the transcriptional repressor activity. Starting from late neurula stage, weakly expressed in midline neural cells, where expression is restricted to the superficial layer of the prospective floorplate. Expressed in the posterior somitic mesoderm (PSM) at tailbud stage. During early tailbud stages, broadly expressed within the pronephric mesoderm both around and inside the developing pronephros. During late tailbud to early tadpole stages, expressed more ventrally in the pronephros, and although initially expressed in both the lateral and medial layers, by these later stages expression is predominantly in the lateral layer. Pronephric expression is no longer detectable in late tadpoles (stage 35).

The protein localises to the nucleus. Transcriptional repressor of a subset of early mesodermal genes including myod1 and t/bra. Binds DNA on N-box motifs: 5'-CACNAG-3'. Acts as a negative regulator of myogenesis, mediating Notch signaling to repress expression of myod1. In Xenopus laevis (African clawed frog), this protein is Transcription factor HES-1-A (hes1-a).